Here is a 256-residue protein sequence, read N- to C-terminus: 3-dehydroquinate dehydratase (256 aa).

Residues Ser19, 38–40 (EIR), and Arg68 each bind 3-dehydroquinate. Residue His122 is the Proton donor/acceptor of the active site. Lys147 serves as the catalytic Schiff-base intermediate with substrate. Positions 185, 204, and 208 each coordinate 3-dehydroquinate.

This sequence belongs to the type-I 3-dehydroquinase family. In terms of assembly, homodimer.

It catalyses the reaction 3-dehydroquinate = 3-dehydroshikimate + H2O. The protein operates within metabolic intermediate biosynthesis; chorismate biosynthesis; chorismate from D-erythrose 4-phosphate and phosphoenolpyruvate: step 3/7. Functionally, involved in the third step of the chorismate pathway, which leads to the biosynthesis of aromatic amino acids. Catalyzes the cis-dehydration of 3-dehydroquinate (DHQ) and introduces the first double bond of the aromatic ring to yield 3-dehydroshikimate. The sequence is that of 3-dehydroquinate dehydratase from Methanospirillum hungatei JF-1 (strain ATCC 27890 / DSM 864 / NBRC 100397 / JF-1).